The chain runs to 372 residues: MSRLLGGTLERVCKAVLLLCLLHFLVAVILYFDVYAQHLAFFSRFSARGPAHALHPAASSSSSSSNCSRPNATASSSGLPEVPSALPGPTAPTLPPCPDSPPGLVGRLLIEFTSPMPLERVQRENPGVLMGGRYTPPDCTPAQTVAVIIPFRHREHHLRYWLHYLHPILRRQRLRYGVYVINQHGEDTFNRAKLLNVGFLEALKEDAAYDCFIFSDVDLVPMDDRNLYRCGDQPRHFAIAMDKFGFRLPYAGYFGGVSGLSKAQFLRINGFPNEYWGWGGEDDDIFNRISLTGMKISRPDIRIGRYRMIKHDRDKHNEPNPQRFTKIQNTKLTMKRDGIGSVRYQVLEVSRQPLFTNITVDIGRPPSWPPRG.

Residues 1–15 (MSRLLGGTLERVCKA) lie on the Cytoplasmic side of the membrane. A helical; Signal-anchor for type II membrane protein membrane pass occupies residues 16-36 (VLLLCLLHFLVAVILYFDVYA). At 37–372 (QHLAFFSRFS…GRPPSWPPRG (336 aa)) the chain is on the lumenal side. Residues 56–97 (PAASSSSSSSNCSRPNATASSSGLPEVPSALPGPTAPTLPPC) form a disordered region. Residues asparagine 66 and asparagine 71 are each glycosylated (N-linked (GlcNAc...) asparagine). Over residues 66–78 (NCSRPNATASSSG) the composition is skewed to polar residues. Cysteine 97 and cysteine 139 are oxidised to a cystine. UDP-alpha-D-galactose contacts are provided by residues 150 to 154 (PFRHR), 189 to 191 (FNR), 217 to 218 (VD), and tryptophan 278. The cysteines at positions 211 and 230 are disulfide-linked. A Mn(2+)-binding site is contributed by aspartate 218. 280–283 (GEDD) provides a ligand contact to N-acetyl-D-glucosamine. Histidine 311 serves as a coordination point for Mn(2+). 311 to 313 (HDR) is a binding site for UDP-alpha-D-galactose. Arginine 323 contacts N-acetyl-D-glucosamine. Asparagine 357 carries N-linked (GlcNAc...) asparagine glycosylation.

It belongs to the glycosyltransferase 7 family. Mn(2+) is required as a cofactor. In terms of tissue distribution, weakly expressed in various tissues. Highest expression in prostate, testis, ovary, intestine, muscle, and in fetal brain.

The protein resides in the golgi apparatus. It is found in the golgi stack membrane. It carries out the reaction D-glucose + UDP-alpha-D-galactose = lactose + UDP + H(+). The catalysed reaction is an N-acetyl-beta-D-glucosaminyl derivative + UDP-alpha-D-galactose = a beta-D-galactosyl-(1-&gt;4)-N-acetyl-beta-D-glucosaminyl derivative + UDP + H(+). The enzyme catalyses N-acetyl-D-glucosamine + UDP-alpha-D-galactose = beta-D-galactosyl-(1-&gt;4)-N-acetyl-D-glucosamine + UDP + H(+). It participates in protein modification; protein glycosylation. Its function is as follows. Responsible for the synthesis of complex-type N-linked oligosaccharides in many glycoproteins as well as the carbohydrate moieties of glycolipids. Can produce lactose. The sequence is that of Beta-1,4-galactosyltransferase 2 from Homo sapiens (Human).